We begin with the raw amino-acid sequence, 92 residues long: UPF0728 protein (92 aa).

The protein belongs to the UPF0728 family.

The protein is UPF0728 protein of Branchiostoma floridae (Florida lancelet).